A 469-amino-acid chain; its full sequence is uncharacterized protein (469 aa).

3 helical membrane passes run 42–62, 179–199, and 249–269; these read DVII…AYVI, IVLP…VTPS, and NLKY…GLFV.

Its subcellular location is the cell membrane. This is an uncharacterized protein from Methanocaldococcus jannaschii (strain ATCC 43067 / DSM 2661 / JAL-1 / JCM 10045 / NBRC 100440) (Methanococcus jannaschii).